The sequence spans 426 residues: MSKSENLYSAARELIPGGVNSPVRAFTGVGGTPLFIEKADGAYLYDVDGKAYIDYVGSWGPMVLGHNHPAIRNAVIEAAERGLSFGAPTEMEVKMAQLVTELVPTMDMVRMVNSGTEATMSAIRLARGFTGRDKIIKFEGCYHGHADCLLVKAGSGALTLGQPNSPGVPADFAKHTLTCTYNDLASVRAAFEQYPQEIACIIVEPVAGNMNCVPPLPEFLPGLRALCDEFGALLIIDEVMTGFRVALAGAQDYYDVVPDLTCLGKIIGGGMPVGAFGGRRDVMDALAPIGPVYQAGTLSGNPIAMAAGFACLNEVAQPGVHETLDELTTRLAEGLLEAAEEAGIPLVVNHVGGMFGIFFTDAESVTCYQDVMACDVERFKRFFHMMLDEGVYLAPSAFEAGFMSVAHSMEDINNTIDAARRVFAKL.

Lys-265 carries the N6-(pyridoxal phosphate)lysine modification.

This sequence belongs to the class-III pyridoxal-phosphate-dependent aminotransferase family. HemL subfamily. In terms of assembly, homodimer. Requires pyridoxal 5'-phosphate as cofactor.

Its subcellular location is the cytoplasm. The catalysed reaction is (S)-4-amino-5-oxopentanoate = 5-aminolevulinate. It functions in the pathway porphyrin-containing compound metabolism; protoporphyrin-IX biosynthesis; 5-aminolevulinate from L-glutamyl-tRNA(Glu): step 2/2. The protein is Glutamate-1-semialdehyde 2,1-aminomutase of Escherichia fergusonii (strain ATCC 35469 / DSM 13698 / CCUG 18766 / IAM 14443 / JCM 21226 / LMG 7866 / NBRC 102419 / NCTC 12128 / CDC 0568-73).